A 568-amino-acid chain; its full sequence is Vitamin H transporter 1 (568 aa).

A run of 12 helical transmembrane segments spans residues 85-105 (IIPC…TVSL), 123-143 (GYSA…YIIF), 158-178 (IWVS…AVLG), 187-207 (YVAL…GLAY), 222-242 (IGWY…VSAG), 257-277 (WMFL…PWWL), 345-365 (VWPF…IFNY), 384-404 (LLNA…MPLY), 411-431 (FSFF…ANYA), 439-459 (GGLL…MAWC), 470-490 (VGVA…SVVT), and 508-528 (NDVC…EFLL). The disordered stretch occupies residues 547–568 (VEDEQEMTDIKPALPSSQQADA).

It belongs to the major facilitator superfamily. Allantoate permease family.

It localises to the membrane. Its function is as follows. Involved in uptake of biotin and desthiobiotin with the concomitant entry of protons. In Schizosaccharomyces pombe (strain 972 / ATCC 24843) (Fission yeast), this protein is Vitamin H transporter 1 (vht1).